The following is a 65-amino-acid chain: Conotoxin Lt5.1 (65 aa).

A signal peptide spans 1–19 (MRCLPVFIILLLLIPSAPS). Positions 20–48 (VDAQRKTKDDVPLASFHDNAKRTLKRLWN) are excised as a propeptide.

The protein belongs to the conotoxin T superfamily. Post-translationally, contains 2 disulfide bonds that can be either 'C1-C3, C2-C4' or 'C1-C4, C2-C3', since these disulfide connectivities have been observed for conotoxins with cysteine framework V (for examples, see AC P0DQQ7 and AC P81755). Expressed by the venom duct.

It is found in the secreted. The chain is Conotoxin Lt5.1 from Conus litteratus (Lettered cone).